We begin with the raw amino-acid sequence, 591 residues long: L-fucose isomerase (591 aa).

Catalysis depends on proton acceptor residues glutamate 337 and aspartate 361. The Mn(2+) site is built by glutamate 337, aspartate 361, and histidine 528.

It belongs to the L-fucose isomerase family. In terms of assembly, homohexamer. Mn(2+) is required as a cofactor.

The protein resides in the cytoplasm. It carries out the reaction L-fucose = L-fuculose. Its pathway is carbohydrate degradation; L-fucose degradation; L-lactaldehyde and glycerone phosphate from L-fucose: step 1/3. Converts the aldose L-fucose into the corresponding ketose L-fuculose. In Salmonella heidelberg (strain SL476), this protein is L-fucose isomerase.